Here is a 417-residue protein sequence, read N- to C-terminus: UDP-N-acetylglucosamine 1-carboxyvinyltransferase (417 aa).

Position 22-23 (22-23 (KN)) interacts with phosphoenolpyruvate. R92 is a binding site for UDP-N-acetyl-alpha-D-glucosamine. Residue C116 is the Proton donor of the active site. A 2-(S-cysteinyl)pyruvic acid O-phosphothioketal modification is found at C116. 2 residues coordinate UDP-N-acetyl-alpha-D-glucosamine: D304 and I326.

Belongs to the EPSP synthase family. MurA subfamily.

It localises to the cytoplasm. It catalyses the reaction phosphoenolpyruvate + UDP-N-acetyl-alpha-D-glucosamine = UDP-N-acetyl-3-O-(1-carboxyvinyl)-alpha-D-glucosamine + phosphate. It functions in the pathway cell wall biogenesis; peptidoglycan biosynthesis. Cell wall formation. Adds enolpyruvyl to UDP-N-acetylglucosamine. This is UDP-N-acetylglucosamine 1-carboxyvinyltransferase from Geotalea uraniireducens (strain Rf4) (Geobacter uraniireducens).